Reading from the N-terminus, the 94-residue chain is NADH dehydrogenase [ubiquinone] iron-sulfur protein 3, mitochondrial (94 aa).

This sequence belongs to the complex I 30 kDa subunit family. Core subunit of respiratory chain NADH dehydrogenase (Complex I) which is composed of 45 different subunits. Interacts with NDUFAF3. Interacts with RAB5IF. Found in subcomplexes containing subunits NDUFS2, MT-ND1 and NDUFA13.

It is found in the mitochondrion inner membrane. It catalyses the reaction a ubiquinone + NADH + 5 H(+)(in) = a ubiquinol + NAD(+) + 4 H(+)(out). In terms of biological role, core subunit of the mitochondrial membrane respiratory chain NADH dehydrogenase (Complex I) which catalyzes electron transfer from NADH through the respiratory chain, using ubiquinone as an electron acceptor. Essential for the catalytic activity and assembly of complex I. This Mesocricetus auratus (Golden hamster) protein is NADH dehydrogenase [ubiquinone] iron-sulfur protein 3, mitochondrial.